Here is a 132-residue protein sequence, read N- to C-terminus: UPF0047 protein YugU (132 aa).

The protein belongs to the UPF0047 family.

This is UPF0047 protein YugU (yugU) from Bacillus subtilis (strain 168).